Reading from the N-terminus, the 254-residue chain is Undecaprenyl-diphosphatase 3 (254 aa).

8 helical membrane passes run 8-28 (TEFL…LIGF), 33-53 (AKVF…VIFW), 74-94 (LHII…HSAI), 97-117 (VLFG…LMIV), 133-153 (ITYK…WPGF), 174-194 (AEYT…LDLI), 207-227 (LFAT…VSFL), and 233-253 (VKLT…YFFI).

This sequence belongs to the UppP family.

The protein localises to the cell membrane. The enzyme catalyses di-trans,octa-cis-undecaprenyl diphosphate + H2O = di-trans,octa-cis-undecaprenyl phosphate + phosphate + H(+). Functionally, catalyzes the dephosphorylation of undecaprenyl diphosphate (UPP). Confers resistance to bacitracin. This chain is Undecaprenyl-diphosphatase 3, found in Bacillus thuringiensis (strain Al Hakam).